The chain runs to 144 residues: Hemoglobin subunit alpha-1 (144 aa).

At Ser1 the chain carries N-acetylserine. The 144-residue stretch at 1–144 folds into the Globin domain; sequence SLTAKDKSVV…VSAALADKYR (144 aa). His61 contacts O2. A heme b-binding site is contributed by His90.

It belongs to the globin family. In terms of assembly, heterotetramer of two alpha chains and two beta chains. As to expression, red blood cells.

Functionally, involved in oxygen transport from gills to the various peripheral tissues. The chain is Hemoglobin subunit alpha-1 (hba1) from Oncorhynchus mykiss (Rainbow trout).